The following is a 625-amino-acid chain: Somatic embryogenesis receptor kinase 1 (625 aa).

The signal sequence occupies residues 1 to 26; it reads MESSYVVFILLSLILLPNHSLWLASA. Over 27–238 the chain is Extracellular; that stretch reads NLEGDALHTL…STPSGYGITG (212 aa). Cys-58 and Cys-65 are joined by a disulfide. 2 leucine-rich repeat receptor-like protein kinase binding regions span residues 59–78 and 97–102; these read TWFH…DLGN and YLELYS. 61–62 serves as a coordination point for brassinolide; the sequence is FH. LRR repeat units lie at residues 92-116, 118-140, 141-164, and 165-189; these read LKNL…LGNL, NLVS…LGKL, SKLR…LTNI, and TTLQ…SFSL. Asn-104 and Asn-115 each carry an N-linked (GlcNAc...) asparagine glycan. Leucine-rich repeat receptor-like protein kinase binding regions lie at residues 123 to 126 and 145 to 147; these read DLYL and FLR. Residues Asn-150, Asn-163, and Asn-184 are each glycosylated (N-linked (GlcNAc...) asparagine). Positions 171-194 are leucine-rich repeat receptor-like protein kinase binding; the sequence is DLSNNRLSGSVPDNGSFSLFTPIS. Cys-202 and Cys-210 are joined by a disulfide. The chain crosses the membrane as a helical span at residues 239-259; the sequence is AIAGGVAAGAALLFAAPAIAF. Residues 260 to 625 are Cytoplasmic-facing; the sequence is AWWRRRKPLD…LHAVELSGPR (366 aa). Phosphoserine is present on residues Ser-291, Ser-299, and Ser-303. One can recognise a Protein kinase domain in the interval 302 to 589; sequence FSNKNILGRG…GLAEKWDEWQ (288 aa). Position 308-316 (308-316) interacts with ATP; sequence LGRGGFGKV. At Thr-325 the chain carries Phosphothreonine. ATP is bound at residue Lys-330. Phosphothreonine occurs at positions 337 and 346. Residues Ser-352, Ser-383, Ser-386, and Ser-394 each carry the phosphoserine modification. The residue at position 402 (Thr-402) is a Phosphothreonine. Phosphoserine is present on Ser-415. Asp-429 functions as the Proton acceptor in the catalytic mechanism. Tyr-456 bears the Phosphotyrosine mark. Phosphothreonine occurs at positions 459, 462, 463, and 468. Tyr-476 is modified (phosphotyrosine). The residue at position 478 (Ser-478) is a Phosphoserine. A Phosphothreonine modification is found at Thr-479. Ser-483 is subject to Phosphoserine. Thr-541 is subject to Phosphothreonine. At Tyr-543 the chain carries Phosphotyrosine. Thr-559 carries the phosphothreonine modification. Phosphoserine occurs at positions 606 and 612. Thr-613 carries the phosphothreonine modification. Phosphotyrosine is present on Tyr-614. Ser-622 carries the phosphoserine modification.

The protein belongs to the protein kinase superfamily. Ser/Thr protein kinase family. As to quaternary structure, monomer, homo- and heterodimer. Interacts with KAPP, CDC48A, GRF6 or GRF7, SERK2, BRI1 and SERK3/BAK1 to form the SERK1 signaling complex. Bind to BRI1 in a brassinolide-dependent manner. Heterodimer with PSKR1. Interacts with the EF-Tu receptor EFR and FLS2 in a specific ligand-induced manner. Interacts with ERECTA in a EPF2-induced manner. Interacts with ERL1 in a EPF1-induced manner. Interacts with TMM. In the presence of the signal peptide RGF1, interacts with RGI1/RGFR4/RCH2, RGI2/RGFR3/RCH1, RGI3/RGFR1, RGI4/RGFR2/SKM2 and RGI5/RGFR5. It depends on Mg(2+) as a cofactor. Glycosylated. Important for targeting to the plasma membrane. Post-translationally, intermolecular autophosphorylation. The catalytic activity of SERK1 depends on the presence of a phosphorylated Thr residue in SERK1. The phosphorylation is induced by brassinosteroids. Transphosphorylation by BRI1 occurs only on Ser-299 and Thr-462. Dephosphorylation of threonine residues by the kinase-associated protein phosphatase (KAPP) is involved in SERK1 endocytosis. As to expression, expressed in flowers, tapetum, developing microspores, all cells of the embryo sac, provascular strands and developing vascular bundles. Low expression in adult vascular tissue. Detected in root meristem.

Its subcellular location is the cell membrane. It localises to the endoplasmic reticulum membrane. The catalysed reaction is L-seryl-[protein] + ATP = O-phospho-L-seryl-[protein] + ADP + H(+). It carries out the reaction L-threonyl-[protein] + ATP = O-phospho-L-threonyl-[protein] + ADP + H(+). It catalyses the reaction L-tyrosyl-[protein] + ATP = O-phospho-L-tyrosyl-[protein] + ADP + H(+). Inhibited by manganese. Dual specificity kinase acting on both serine/threonine- and tyrosine-containing substrates. Phosphorylates BRI1 on 'Ser-887' and CDC48 on at least one threonine residue and on 'Ser-41'. Confers embryogenic competence. Acts redundantly with SERK2 as a control point for sporophytic development controlling male gametophyte production. Involved in the brassinolide signaling pathway. Probably required during small peptide (e.g. RGF1) signaling. Involved in the perception of phytosulfokine and subsequent signal transduction. Acts as a RLK5 coreceptor and promotes high-affinity IDA sensing, thus being a positive regulator of floral abscission. The polypeptide is Somatic embryogenesis receptor kinase 1 (Arabidopsis thaliana (Mouse-ear cress)).